The chain runs to 511 residues: Caspase-8 (511 aa).

Residues 1–242 constitute a propeptide that is removed on maturation; it reads MSGHNILTQL…MDGNGIANES (242 aa). Catalysis depends on residues H352 and C393. A propeptide spanning residues 406–415 is cleaved from the precursor; it reads KINASTKSPC.

This sequence belongs to the peptidase C14A family. Heterotetramer that consists of two anti-parallel arranged heterodimers, each one formed by a 15 kDa (caspase-8 subunit p15) and a 10 kDa (caspase-8 subunit p10) subunit. Interacts with the N-terminus of Fadd.

The protein resides in the cytoplasm. The enzyme catalyses Strict requirement for Asp at position P1 and has a preferred cleavage sequence of (Leu/Asp/Val)-Glu-Thr-Asp-|-(Gly/Ser/Ala).. Its function is as follows. Effector of the programmed cell death (PCD) activators rpr, grim and W. May play an apoptotic role in the germline as well as soma. Role in immune response, required to resist Gram-negative bacterial infections by regulating DptA. Fadd interacts with Dredd, Fadd promotes cleavage of Dredd and is necessary and sufficient for enhancing Dredd-induced apoptosis. This chain is Caspase-8, found in Drosophila pseudoobscura pseudoobscura (Fruit fly).